Reading from the N-terminus, the 99-residue chain is uncharacterized protein (99 aa).

The first 17 residues, 1–17, serve as a signal peptide directing secretion; it reads MMMNAFFPAMALIVLVG. Cysteine 18 is lipidated: N-palmitoyl cysteine. The S-diacylglycerol cysteine moiety is linked to residue cysteine 18.

It localises to the cell membrane. This is an uncharacterized protein from Escherichia coli (strain UTI89 / UPEC).